The sequence spans 266 residues: Putative carbamate hydrolase RutD (266 aa).

Belongs to the AB hydrolase superfamily. Hydrolase RutD family.

It carries out the reaction carbamate + 2 H(+) = NH4(+) + CO2. Involved in pyrimidine catabolism. May facilitate the hydrolysis of carbamate, a reaction that can also occur spontaneously. The polypeptide is Putative carbamate hydrolase RutD (Escherichia coli O139:H28 (strain E24377A / ETEC)).